A 624-amino-acid chain; its full sequence is Kelch-like ECH-associated protein 1 (624 aa).

C38 bears the S-(2-succinyl)cysteine mark. The 73-residue stretch at C77–E149 folds into the BTB domain. Residue R135 forms an N5-[4-(S-L-cysteinyl)-5-methyl-1H-imidazol-2-yl]-L-ornithine (Arg-Cys) (interchain with C-151 in KEAP1) linkage. S-(2-succinyl)cysteine occurs at positions 151 and 241. Position 151 is an S-(2,3-dicarboxypropyl)cysteine; alternate (C151). C151 is subject to S-nitrosocysteine; alternate. C151 participates in a covalent cross-link: N5-[4-(S-L-cysteinyl)-5-methyl-1H-imidazol-2-yl]-L-ornithine (Cys-Arg) (interchain with R-135 in KEAP1). Residues A184–Q286 form the BACK domain. An S-(2,3-dicarboxypropyl)cysteine mark is found at C257 and C273. S-(2-succinyl)cysteine is present on residues C288 and C319. At C288 the chain carries S-(2,3-dicarboxypropyl)cysteine; alternate. 6 Kelch repeats span residues L327–G372, L373–G423, H424–R470, L471–N517, C518–G564, and R565–E611. C434 carries the S-cGMP-cysteine modification. The residue at position 613 (C613) is an S-(2-succinyl)cysteine.

The protein belongs to the KEAP1 family. Component of the BCR(KEAP1) E3 ubiquitin ligase complex, at least composed of 2 molecules of CUL3, 2 molecules of KEAP1, and RBX1. Interacts with NFE2L2/NRF2; the interaction is direct. Forms a ternary complex with NFE2L2/NRF2 and PGAM5. Interacts with (phosphorylated) SQSTM1/p62; the interaction is direct and inactivates the BCR(KEAP1) complex by sequestering it in inclusion bodies, promoting its degradation. Interacts with NFE2L1. Interacts with BPTF and PTMA. Interacts with MAP1LC3B. Interacts indirectly with ENC1. Interacts with SESN1 and SESN2. Interacts with HSP90AA1 and HSP90AB1. Interacts with PGCKA1; this interaction prevents the ubiquitination of KEAP1 by TRIM25, thus protecting KEAP1 from degradation. In terms of processing, non-enzymatic covalent modifications of reactive cysteines by electrophile metabolites inactivate the BCR(KEAP1) complex. Accumulation of fumarate promotes the formation of cysteine S-succination (S-(2-succinyl)cysteine), leading to inactivate the BCR(KEAP1) complex and promote NFE2L2/NRF2 nuclear accumulation and activation. Nitric oxide-dependent 8-Nitro-cGMP formation promotes cysteine guanylation (S-cGMP-cysteine), leading to NFE2L2/NRF2 nuclear accumulation and activation. Itaconate, an anti-inflammatory metabolite generated in response to lipopolysaccharide, alkylates cysteines, activating NFE2L2/NRF2. Methylglyoxal, a reactive metabolite that accumulates when the glycolytic enzyme PGK1 is inhibited, promotes formation of a methylimidazole cross-link between proximal Cys-151 and Arg-135 on another KEAP1 molecule, resulting in an inactive dimer that inactivates the BCR(KEAP1) complex. Degraded via a proteasomal-independent process during selective autophagy: interaction with phosphorylated SQSTM1/p62 sequesters KEAP1 in inclusion bodies, leading to its degradation. Post-translationally, auto-ubiquitinated by the BCR(KEAP1) complex. Quinone-induced oxidative stress, but not sulforaphane, increases its ubiquitination. Ubiquitination and subsequent degradation is most pronounced following prolonged exposure of cells to oxidative stress, particularly in glutathione-deficient cells that are highly susceptible to oxidative stress. Deubiquitinated by USP25; leading to stabilization. Ubiquitinated by TRIM25; leading to degradation upon ER stress.

It is found in the cytoplasm. The protein localises to the nucleus. It functions in the pathway protein modification; protein ubiquitination. With respect to regulation, ubiquitin ligase activity of the BCR(KEAP1) complex is inhibited by oxidative stress and electrophile metabolites such as sulforaphane. Electrophile metabolites react with reactive cysteine residues in KEAP1 and trigger non-enzymatic covalent modifications of these cysteine residues, leading to inactivate the ubiquitin ligase activity of the BCR(KEAP1) complex. Selective autophagy also inactivates the BCR(KEAP1) complex via interaction between KEAP1 and SQSTM1/p62, which sequesters the complex in inclusion bodies and promotes its degradation. In terms of biological role, substrate-specific adapter of a BCR (BTB-CUL3-RBX1) E3 ubiquitin ligase complex that regulates the response to oxidative stress by targeting NFE2L2/NRF2 for ubiquitination. KEAP1 acts as a key sensor of oxidative and electrophilic stress: in normal conditions, the BCR(KEAP1) complex mediates ubiquitination and degradation of NFE2L2/NRF2, a transcription factor regulating expression of many cytoprotective genes. In response to oxidative stress, different electrophile metabolites trigger non-enzymatic covalent modifications of highly reactive cysteine residues in KEAP1, leading to inactivate the ubiquitin ligase activity of the BCR(KEAP1) complex, promoting NFE2L2/NRF2 nuclear accumulation and expression of phase II detoxifying enzymes. In response to selective autophagy, KEAP1 is sequestered in inclusion bodies following its interaction with SQSTM1/p62, leading to inactivation of the BCR(KEAP1) complex and activation of NFE2L2/NRF2. The BCR(KEAP1) complex also mediates ubiquitination of SQSTM1/p62, increasing SQSTM1/p62 sequestering activity and degradation. The BCR(KEAP1) complex also targets BPTF and PGAM5 for ubiquitination and degradation by the proteasome. The chain is Kelch-like ECH-associated protein 1 from Pongo abelii (Sumatran orangutan).